The sequence spans 1048 residues: Putative helicase/primase complex protein (1048 aa).

The tract at residues 1025–1048 (STKEESSPTREETSSIKEKTFTET) is disordered.

The protein belongs to the asfivirus F1055L family.

In terms of biological role, may be involved in DNA replication. This is Putative helicase/primase complex protein from African swine fever virus (isolate Pig/Kenya/KEN-50/1950) (ASFV).